Here is a 399-residue protein sequence, read N- to C-terminus: Dual-specificity RNA methyltransferase RlmN (399 aa).

Glu120 functions as the Proton acceptor in the catalytic mechanism. A Radical SAM core domain is found at 126 to 367; that stretch reads EEGRGTLCVS…SPVRTPRGRD (242 aa). A disulfide bond links Cys133 and Cys372. The [4Fe-4S] cluster site is built by Cys140, Cys144, and Cys147. S-adenosyl-L-methionine is bound by residues 198–199, Ser230, 252–254, and Asn329; these read GE and SLH. The active-site S-methylcysteine intermediate is Cys372.

This sequence belongs to the radical SAM superfamily. RlmN family. [4Fe-4S] cluster is required as a cofactor.

It localises to the cytoplasm. It catalyses the reaction adenosine(2503) in 23S rRNA + 2 reduced [2Fe-2S]-[ferredoxin] + 2 S-adenosyl-L-methionine = 2-methyladenosine(2503) in 23S rRNA + 5'-deoxyadenosine + L-methionine + 2 oxidized [2Fe-2S]-[ferredoxin] + S-adenosyl-L-homocysteine. The catalysed reaction is adenosine(37) in tRNA + 2 reduced [2Fe-2S]-[ferredoxin] + 2 S-adenosyl-L-methionine = 2-methyladenosine(37) in tRNA + 5'-deoxyadenosine + L-methionine + 2 oxidized [2Fe-2S]-[ferredoxin] + S-adenosyl-L-homocysteine. Functionally, specifically methylates position 2 of adenine 2503 in 23S rRNA and position 2 of adenine 37 in tRNAs. m2A2503 modification seems to play a crucial role in the proofreading step occurring at the peptidyl transferase center and thus would serve to optimize ribosomal fidelity. This chain is Dual-specificity RNA methyltransferase RlmN, found in Parvibaculum lavamentivorans (strain DS-1 / DSM 13023 / NCIMB 13966).